A 175-amino-acid polypeptide reads, in one-letter code: Bifunctional protein PyrR (175 aa).

Residues 40–41, 102–110, arginine 135, and valine 159 contribute to the substrate site; these read TR and DDVLYTGRT. Positions 98–110 match the PRPP-binding motif; it reads VVIIDDVLYTGRT.

Belongs to the purine/pyrimidine phosphoribosyltransferase family. PyrR subfamily. As to quaternary structure, homodimer and homohexamer; in equilibrium.

The enzyme catalyses UMP + diphosphate = 5-phospho-alpha-D-ribose 1-diphosphate + uracil. Functionally, regulates transcriptional attenuation of the pyrimidine nucleotide (pyr) operon by binding in a uridine-dependent manner to specific sites on pyr mRNA. This disrupts an antiterminator hairpin in the RNA and favors formation of a downstream transcription terminator, leading to a reduced expression of downstream genes. In terms of biological role, also displays a weak uracil phosphoribosyltransferase activity which is not physiologically significant. This is Bifunctional protein PyrR from Staphylococcus epidermidis (strain ATCC 12228 / FDA PCI 1200).